Here is a 189-residue protein sequence, read N- to C-terminus: Cancer/testis antigen family 45 member A2 (189 aa).

It belongs to the CT45 family. In terms of tissue distribution, testis specific. Expressed in cancer cell lines.

The sequence is that of Cancer/testis antigen family 45 member A2 from Homo sapiens (Human).